Here is a 1481-residue protein sequence, read N- to C-terminus: Cystic fibrosis transmembrane conductance regulator (1481 aa).

The Cytoplasmic segment spans residues 1–77 (MQRSPLEKAS…KLINALRRCF (77 aa)). A helical membrane pass occupies residues 78–98 (FWRFMFYGILLYLGEVTKAVQ). The 285-residue stretch at 81-365 (FMFYGILLYL…WAVQTWYDSL (285 aa)) folds into the ABC transmembrane type-1 1 domain. Residues 99–122 (PLLLGRIIASYDPDNKVERSIAIY) lie on the Extracellular side of the membrane. Residues 123-146 (LGIGLCLLFIVRMLLLHPAIFGLH) form a helical membrane-spanning segment. Residues 147 to 195 (HIGMQMRIAMFSLIYKKILKLSSRVLDKISIGQLVSLLSNNLNKFDEGL) lie on the Cytoplasmic side of the membrane. A helical transmembrane segment spans residues 196 to 216 (ALAHFVWIAPLQVMLLMGLLW). Topologically, residues 217-222 (ELLQAS) are extracellular. A helical membrane pass occupies residues 223–243 (AFCGLGFLIVLALFQSGLGRM). Topologically, residues 244 to 298 (MMKYRDQRAGKINERLVITSEMIENIQSVKAYCWEEAMEKMIENLRQTELKLTRK) are cytoplasmic. The helical transmembrane segment at 299–319 (AAYVRYFNSSAFFFSGFFVVF) threads the bilayer. The Extracellular portion of the chain corresponds to 320-339 (LSVLPYALIKGIILRKIFTT). Residues 340–358 (ISFCIVLRMAVTRQFPWAV) form a helical membrane-spanning segment. The Cytoplasmic portion of the chain corresponds to 359–858 (QTWYDSLGAI…YLRYITVHKS (500 aa)). ATP-binding positions include Trp-401, 458 to 465 (GSTGAGKT), and Gln-493. One can recognise an ABC transporter 1 domain in the interval 423 to 646 (NGDNSLFFSN…RPDFSSKLMG (224 aa)). Residue Cys-524 is the site of S-palmitoyl cysteine attachment. Ser-549 and Ser-660 each carry phosphoserine. Residues 654–831 (SAERRNSILT…EEINEEDLKE (178 aa)) are disordered R region. Position 670 is a phosphoserine; by PKA (Ser-670). Ser-686 carries the phosphoserine modification. A Glycyl lysine isopeptide (Lys-Gly) (interchain with G-Cter in ubiquitin) cross-link involves residue Lys-688. Ser-700 and Ser-712 each carry phosphoserine. Thr-717 carries the post-translational modification Phosphothreonine. Phosphoserine occurs at positions 737, 768, 790, 795, and 813. A helical membrane pass occupies residues 859-879 (LIFVLIWCLVIFLAEVAVSLV). In terms of domain architecture, ABC transmembrane type-1 2 spans 859–1155 (LIFVLIWCLV…AVNSSIDVDS (297 aa)). The Extracellular segment spans residues 880–918 (LLWLLGNAPAYNKGNSTISANSSYAVIITSTSAYYVFYI). 2 N-linked (GlcNAc...) asparagine glycosylation sites follow: Asn-894 and Asn-900. A discontinuously helical membrane pass occupies residues 919-939 (YVGVADTLLALGFFRGLPLVH). Residues 940 to 990 (TLITVSKILHHKMLHSVLQAPMSTLNALKAGGILNRFSKDIAILDDLLPLT) lie on the Cytoplasmic side of the membrane. The helical transmembrane segment at 991–1011 (IFDFIQLLLIVIGAVAVVSVL) threads the bilayer. Residues 1012–1013 (QP) are Extracellular-facing. The chain crosses the membrane as a helical span at residues 1014–1034 (YIFLATVPVIVTFIILRAYFL). Residues 1035-1095 (HTSQQLKQLE…TANWFLYLST (61 aa)) lie on the Cytoplasmic side of the membrane. Residues 1096–1116 (LRWFQMRIEMVFVIFFIVVTF) traverse the membrane as a helical segment. Topologically, residues 1117 to 1130 (ISILTTGEGEGQVG) are extracellular. Residues 1131 to 1151 (IILTLAMNIMGTLQWAVNSSI) traverse the membrane as a helical segment. Residues 1152–1481 (DVDSLMRSVS…TEEEVQDTRL (330 aa)) are Cytoplasmic-facing. The ABC transporter 2 domain occupies 1211-1444 (MTVKDLTARY…KSLFRQAISP (234 aa)). ATP-binding positions include Tyr-1220 and 1245–1252 (GRTGSGKS). The segment at 1387–1481 (RTLKQAFADC…TEEEVQDTRL (95 aa)) is interaction with GORASP2. The S-palmitoyl cysteine moiety is linked to residue Cys-1396. Phosphoserine occurs at positions 1445 and 1457. The segment at 1449-1481 (KLFPRRNSSKHKSRPPITALKEETEEEVQDTRL) is disordered. Basic residues predominate over residues 1450-1462 (LFPRRNSSKHKSR). The segment covering 1471 to 1481 (ETEEEVQDTRL) has biased composition (acidic residues). A PDZ-binding motif is present at residues 1479–1481 (TRL).

It belongs to the ABC transporter superfamily. ABCC family. CFTR transporter (TC 3.A.1.202) subfamily. Monomer; does not require oligomerization for channel activity. May form oligomers in the membrane. Interacts with SLC26A3, SLC26A6 and NHERF1. Interacts with SHANK2. Interacts with MYO6. Interacts (via C-terminus) with GOPC (via PDZ domain); this promotes CFTR internalization and thereby decreases channel activity. Interacts with SLC4A7 through NHERF1. Found in a complex with MYO5B and RAB11A. Interacts with ANO1. Interacts with SLC26A8. Interacts with AHCYL1; the interaction increases CFTR activity. Interacts with CSE1L. The core-glycosylated form interacts with GORASP2 (via PDZ GRASP-type 1 domain) in respone to ER stress. Interacts with MARCHF2; the interaction leads to CFTR ubiqtuitination and degradation. Interacts with ADGRG2. N-glycosylated. Post-translationally, phosphorylated; cAMP treatment promotes phosphorylation and activates the channel. Dephosphorylation decreases the ATPase activity (in vitro). Phosphorylation at PKA sites activates the channel. Phosphorylation at PKC sites enhances the response to phosphorylation by PKA. Phosphorylated by AMPK; this inhibits channel activity. In terms of processing, ubiquitinated, leading to its degradation in the lysosome. Deubiquitination by USP10 in early endosomes enhances its endocytic recycling to the cell membrane. Ubiquitinated by RNF185 during ER stress. Ubiquitinated by MARCHF2.

The protein resides in the apical cell membrane. It is found in the early endosome membrane. It localises to the cell membrane. The protein localises to the recycling endosome membrane. Its subcellular location is the endoplasmic reticulum membrane. The protein resides in the nucleus. The catalysed reaction is ATP + H2O + closed Cl(-) channel = ADP + phosphate + open Cl(-) channel.. It carries out the reaction chloride(in) = chloride(out). The enzyme catalyses hydrogencarbonate(in) = hydrogencarbonate(out). It catalyses the reaction ATP + H2O = ADP + phosphate + H(+). Epithelial ion channel that plays an important role in the regulation of epithelial ion and water transport and fluid homeostasis. Mediates the transport of chloride ions across the cell membrane. Possesses an intrinsic ATPase activity and utilizes ATP to gate its channel; the passive flow of anions through the channel is gated by cycles of ATP binding and hydrolysis by the ATP-binding domains. The ion channel is also permeable to HCO(3)(-); selectivity depends on the extracellular chloride concentration. Exerts its function also by modulating the activity of other ion channels and transporters. Contributes to the regulation of the pH and the ion content of the epithelial fluid layer. Modulates the activity of the epithelial sodium channel (ENaC) complex, in part by regulating the cell surface expression of the ENaC complex. May regulate bicarbonate secretion and salvage in epithelial cells by regulating the transporter SLC4A7. Can inhibit the chloride channel activity of ANO1. Plays a role in the chloride and bicarbonate homeostasis during sperm epididymal maturation and capacitation. This chain is Cystic fibrosis transmembrane conductance regulator, found in Microcebus murinus (Gray mouse lemur).